A 146-amino-acid polypeptide reads, in one-letter code: MNILVLNGPNLDRLGKRQPEIYGRTTLADVEKLLVKRADALGVTVIVKQSNYEGELIDWVHEAADAGWPVIINPGGLTHTSVSLRDALAEIHDGAGFVEVHISNIHAREEFRHHSFLSPIARGVIAGLGVMGYELALEYLVLNSHS.

The active-site Proton acceptor is Y22. Residues N73, H79, and D86 each contribute to the substrate site. Catalysis depends on H101, which acts as the Proton donor. Substrate contacts are provided by residues 102–103 and R112; that span reads IS.

This sequence belongs to the type-II 3-dehydroquinase family. In terms of assembly, homododecamer.

The enzyme catalyses 3-dehydroquinate = 3-dehydroshikimate + H2O. The protein operates within metabolic intermediate biosynthesis; chorismate biosynthesis; chorismate from D-erythrose 4-phosphate and phosphoenolpyruvate: step 3/7. Functionally, catalyzes a trans-dehydration via an enolate intermediate. The sequence is that of 3-dehydroquinate dehydratase (aroQ) from Corynebacterium pseudotuberculosis (strain C231).